We begin with the raw amino-acid sequence, 1351 residues long: Tripartite motif-containing protein 66 (1351 aa).

The B box-type 1; atypical zinc-finger motif lies at 105–150 (MARNCSECKEKRAAHILCTYCNRWLCSSCTEEHRHSPVPGGPFFPR). Zn(2+) contacts are provided by C109, C112, C133, H139, C169, H172, C192, and H197. The B box-type 2 zinc-finger motif lies at 164–205 (DFTLYCPLHTQEVLKLFCETCDMLTCHSCLVVEHKEHRCRHV). The stretch at 234–304 (AKQIEDRIFE…IMVLNRQFEH (71 aa)) forms a coiled coil. Disordered stretches follow at residues 542-608 (FGHH…CSQN), 663-730 (APVQ…VRKH), and 857-895 (CPLQ…DPSL). The span at 560 to 588 (QLPPPPPPLPHPPPPLPPPPQQPHPPLPP) shows a compositional bias: pro residues. The segment covering 664-676 (PVQSQSQEETLQA) has biased composition (polar residues). Over residues 872 to 884 (TGSSSSSGRTSGS) the composition is skewed to low complexity. The short motif at 995 to 999 (PYVRL) is the PxVxL motif element. Residues 1067–1098 (TSLAGQRPPEVEGTSPEEHRLIPRTPGAKKGP) are disordered. Residues 1105–1152 (EDFCAVCLNGGELLCCDRCPKVFHLSCHVPALLSFPGGEWVCTLCRSL) form a PHD-type zinc finger. Residues 1176 to 1282 (GLSMYDQKKC…VFFEGWLKEI (107 aa)) enclose the Bromo domain. The tract at residues 1289 to 1351 (AQPRQEDSDS…FRLANSISQV (63 aa)) is disordered.

As to quaternary structure, can form homodimers and heterodimers. Interacts with CBX5, CBX1 and CBX3 via PxVxL motif.

Its subcellular location is the nucleus. May function as transcription repressor; The repressive effects are mediated, at least in part, by recruitment of deacetylase activity. May play a role as negative regulator of postmeiotic genes acting through CBX3 complex formation and centromere association. This chain is Tripartite motif-containing protein 66 (TRIM66), found in Homo sapiens (Human).